A 1832-amino-acid polypeptide reads, in one-letter code: Zinc finger protein 646 (1832 aa).

8 consecutive C2H2-type zinc fingers follow at residues 8-31 (LSCS…ELLH), 48-70 (YRCQ…RRTH), 75-97 (FPCT…MRTH), 239-261 (YKCS…RQSH), 266-288 (YPCA…SRLH), 294-316 (YHCP…QQSH), 374-396 (FRCG…RKSH), and 401-424 (YPCS…RAHH). Positions 26–47 (HRELLHPSPNQDSEEADSIPRP) are disordered. The span at 94–108 (MRTHAPEGRRRHRPP) shows a compositional bias: basic residues. The segment at 94–200 (MRTHAPEGRR…TNSARAPPLP (107 aa)) is disordered. Residues 313 to 329 (QQSHEGERQEPRWEEKG) are compositionally biased toward basic and acidic residues. The interval 313–346 (QQSHEGERQEPRWEEKGMPTTNGHTDESSQDQLP) is disordered. Lysine 451 is covalently cross-linked (Glycyl lysine isopeptide (Lys-Gly) (interchain with G-Cter in SUMO2)). 2 C2H2-type zinc fingers span residues 465–487 (YKCS…RHSH) and 492–514 (YQCS…VRVH). Glycyl lysine isopeptide (Lys-Gly) (interchain with G-Cter in SUMO2) cross-links involve residues lysine 534 and lysine 557. Residues 575–597 (HICSICGLLFEDAESLERHGLTH) form a C2H2-type 11 zinc finger. The residue at position 612 (serine 612) is a Phosphoserine. C2H2-type zinc fingers lie at residues 617-639 (FACR…RQTH) and 644-666 (FSCG…LRRH). The disordered stretch occupies residues 660–810 (KNHLRRHSRR…QPNSSSHSAN (151 aa)). A compositionally biased stretch (basic residues) spans 661-678 (NHLRRHSRRRSRRHRKRA). A Glycyl lysine isopeptide (Lys-Gly) (interchain with G-Cter in SUMO2) cross-link involves residue lysine 688. Positions 735–767 (EGDKCGLERDETHFQGDKESGGTGEGLERKDAS) are enriched in basic and acidic residues. Residues 798–810 (ATGQPNSSSHSAN) show a composition bias toward polar residues. 3 C2H2-type zinc fingers span residues 821–843 (HTCS…RPCH), 848–870 (YQCS…FQNH), and 881–904 (FLCC…RQAH). The segment at 901-931 (RQAHSSSGMTEGSEEEGEEEGVAEAAPARSP) is disordered. Residues 912–922 (GSEEEGEEEGV) are compositionally biased toward acidic residues. A C2H2-type 17; degenerate zinc finger spans residues 958–980 (HICGCCGQTYDDLGSLERHHQSQ). 2 consecutive C2H2-type zinc fingers follow at residues 1052–1074 (FRCN…RKIH) and 1079–1101 (FLCP…LRNH). The segment at 1103-1148 (RCKGSEPQVGPIPEAAGSSELQVGPIPEGGSNKPQHMAEEGPGQAE) is disordered. Residues lysine 1157, lysine 1168, and lysine 1178 each participate in a glycyl lysine isopeptide (Lys-Gly) (interchain with G-Cter in SUMO2) cross-link. 6 C2H2-type zinc fingers span residues 1203–1225 (FSCE…RQSH), 1230–1252 (FGCQ…RRIH), 1258–1280 (FRCS…QRVH), 1299–1321 (FRCG…RRSH), 1326–1348 (YSCP…QRLH), and 1364–1386 (VRCA…LREH). Residues 1274–1294 (ASHQRVHMERRGGGGTRKATR) are disordered. 2 disordered regions span residues 1377 to 1481 (GSLE…WVPQ) and 1509 to 1529 (TLSH…QPGS). The segment covering 1378–1393 (SLERHLREHEETEREP) has biased composition (basic and acidic residues). The segment covering 1406 to 1417 (SEANLTGSQGLE) has biased composition (polar residues). A compositionally biased stretch (basic and acidic residues) spans 1427–1438 (PHLEDGVPRPGE). Residues 1460 to 1475 (GKAGGWPVGGGLGNHS) are compositionally biased toward gly residues. C2H2-type zinc fingers lie at residues 1557 to 1579 (HYCL…SHNH), 1585 to 1607 (FACP…LQAH), 1677 to 1699 (FRCT…QKAH), 1704 to 1726 (YPCS…SRTH), 1732 to 1754 (HCCS…GRVH), and 1761 to 1783 (FTCP…QQQH). The tract at residues 1606–1672 (AHARGHSQVP…QAVTSMAAED (67 aa)) is disordered. The tract at residues 1781–1832 (QQHQEEWTVAGSGAPVAPVTGRGDLPLPPPPTPTTPLLDPSPQWPADLSFSL) is disordered.

Belongs to the krueppel C2H2-type zinc-finger protein family.

The protein localises to the nucleus. In terms of biological role, may be involved in transcriptional regulation. This is Zinc finger protein 646 from Homo sapiens (Human).